The sequence spans 347 residues: Autoinducer 2 import system permease protein LsrC (347 aa).

Transmembrane regions (helical) follow at residues 14–34 (LLAI…YLSV), 39–59 (MVFS…MVML), 72–92 (GMCA…PVAC), 93–113 (LATL…VAWL), 115–135 (IPAI…MLLW), 155–175 (VFLG…LMAW), 213–233 (LNGG…GFIP), 249–269 (VLGG…ILGA), and 284–304 (IPAW…LVFD).

The protein belongs to the binding-protein-dependent transport system permease family. AraH/RbsC subfamily. The complex is composed of two ATP-binding proteins (LsrA), two transmembrane proteins (LsrC and LsrD) and a solute-binding protein (LsrB).

The protein resides in the cell inner membrane. Functionally, part of the ABC transporter complex LsrABCD involved in autoinducer 2 (AI-2) import. Probably responsible for the translocation of the substrate across the membrane. This chain is Autoinducer 2 import system permease protein LsrC (lsrC), found in Salmonella paratyphi A (strain ATCC 9150 / SARB42).